A 120-amino-acid polypeptide reads, in one-letter code: UPF0342 protein Csac_0863 (120 aa).

Belongs to the UPF0342 family.

In Caldicellulosiruptor saccharolyticus (strain ATCC 43494 / DSM 8903 / Tp8T 6331), this protein is UPF0342 protein Csac_0863.